A 596-amino-acid chain; its full sequence is NADH-quinone oxidoreductase subunit C/D (596 aa).

The interval 1 to 186 (MTDLTAQDAA…DPFELTKAKQ (186 aa)) is NADH dehydrogenase I subunit C. Residues 210–596 (DFMFLNLGPN…IDFVMSDVDR (387 aa)) form an NADH dehydrogenase I subunit D region.

It in the N-terminal section; belongs to the complex I 30 kDa subunit family. This sequence in the C-terminal section; belongs to the complex I 49 kDa subunit family. NDH-1 is composed of 13 different subunits. Subunits NuoB, CD, E, F, and G constitute the peripheral sector of the complex.

Its subcellular location is the cell inner membrane. It catalyses the reaction a quinone + NADH + 5 H(+)(in) = a quinol + NAD(+) + 4 H(+)(out). Functionally, NDH-1 shuttles electrons from NADH, via FMN and iron-sulfur (Fe-S) centers, to quinones in the respiratory chain. The immediate electron acceptor for the enzyme in this species is believed to be ubiquinone. Couples the redox reaction to proton translocation (for every two electrons transferred, four hydrogen ions are translocated across the cytoplasmic membrane), and thus conserves the redox energy in a proton gradient. This Salmonella dublin (strain CT_02021853) protein is NADH-quinone oxidoreductase subunit C/D.